Reading from the N-terminus, the 75-residue chain is Small ribosomal subunit protein bS18 (75 aa).

Belongs to the bacterial ribosomal protein bS18 family. In terms of assembly, part of the 30S ribosomal subunit. Forms a tight heterodimer with protein bS6.

In terms of biological role, binds as a heterodimer with protein bS6 to the central domain of the 16S rRNA, where it helps stabilize the platform of the 30S subunit. The chain is Small ribosomal subunit protein bS18 from Moorella thermoacetica (strain ATCC 39073 / JCM 9320).